The chain runs to 336 residues: Histidinol-phosphate aminotransferase (336 aa).

At K204 the chain carries N6-(pyridoxal phosphate)lysine.

This sequence belongs to the class-II pyridoxal-phosphate-dependent aminotransferase family. Histidinol-phosphate aminotransferase subfamily. The cofactor is pyridoxal 5'-phosphate.

It carries out the reaction L-histidinol phosphate + 2-oxoglutarate = 3-(imidazol-4-yl)-2-oxopropyl phosphate + L-glutamate. Its pathway is amino-acid biosynthesis; L-histidine biosynthesis; L-histidine from 5-phospho-alpha-D-ribose 1-diphosphate: step 7/9. This chain is Histidinol-phosphate aminotransferase, found in Thermococcus kodakarensis (strain ATCC BAA-918 / JCM 12380 / KOD1) (Pyrococcus kodakaraensis (strain KOD1)).